Here is a 35-residue protein sequence, read N- to C-terminus: Anti-H(O) lectin 3 (35 aa).

The protein belongs to the leguminous lectin family. As to quaternary structure, homodimer. Post-translationally, highly glycosylated.

In terms of biological role, binds lactose or galactose. The protein is Anti-H(O) lectin 3 of Ulex europaeus (Furze).